A 200-amino-acid polypeptide reads, in one-letter code: Ras-related protein Rab-10 (200 aa).

Residues S18, G19, V20, G21, K22, T23, C24, N35, T36, S40, and T41 each contribute to the GTP site. T23 is a Mg(2+) binding site. 2 consecutive short sequence motifs (switch) follow at residues 32 to 46 and 64 to 81; these read DAFN…GIDF and DTAG…YYRG. The Mg(2+) site is built by T41 and D64. GTP is bound by residues G67, N122, K123, D125, M126, S152, A153, and K154. A disordered region spans residues 181 to 200; sequence RENVDISTTGGGTGLKKCCS. S-geranylgeranyl cysteine attachment occurs at residues C198 and C199.

This sequence belongs to the small GTPase superfamily. Rab family. The cofactor is Mg(2+).

It localises to the cytoplasmic vesicle membrane. It is found in the golgi apparatus. Its subcellular location is the trans-Golgi network membrane. The protein resides in the endosome membrane. The protein localises to the recycling endosome membrane. It localises to the cytoplasmic vesicle. It is found in the phagosome membrane. Its subcellular location is the cell projection. The protein resides in the cilium. The protein localises to the endoplasmic reticulum membrane. The enzyme catalyses GTP + H2O = GDP + phosphate + H(+). Regulated by guanine nucleotide exchange factors (GEFs) which promote the exchange of bound GDP for free GTP. Regulated by GTPase activating proteins (GAPs) which increase the GTP hydrolysis activity. Inhibited by GDP dissociation inhibitors (GDIs) which prevent Rab-GDP dissociation. The small GTPases Rab are key regulators of intracellular membrane trafficking, from the formation of transport vesicles to their fusion with membranes. Rabs cycle between an inactive GDP-bound form and an active GTP-bound form that is able to recruit to membranes different set of downstream effectors directly responsible for vesicle formation, movement, tethering and fusion. That Rab is mainly involved in the biosynthetic transport of proteins from the Golgi to the plasma membrane. Also plays a specific role in asymmetric protein transport to the plasma membrane within the polarized neuron and epithelial cells. In neurons, it is involved in axonogenesis through regulation of vesicular membrane trafficking toward the axonal plasma membrane while in epithelial cells, it regulates transport from the Golgi to the basolateral membrane. Moreover, may play a role in the basolateral recycling pathway and in phagosome maturation. Finally, may play a role in endoplasmic reticulum dynamics and morphology controlling tubulation along microtubules and tubules fusion. May participate in the export of neosynthesized proteins through a Rab-dependent endosomal export route. This chain is Ras-related protein Rab-10, found in Diplobatis ommata (Ocellated electric ray).